The sequence spans 351 residues: Biotin synthase (351 aa).

The Radical SAM core domain maps to 44-262; it reads NRVQVSTLLS…LAVARIMMPK (219 aa). [4Fe-4S] cluster-binding residues include Cys59, Cys63, and Cys66. [2Fe-2S] cluster-binding residues include Cys103, Cys134, Cys194, and Arg266.

Belongs to the radical SAM superfamily. Biotin synthase family. As to quaternary structure, homodimer. The cofactor is [4Fe-4S] cluster. [2Fe-2S] cluster serves as cofactor.

It catalyses the reaction (4R,5S)-dethiobiotin + (sulfur carrier)-SH + 2 reduced [2Fe-2S]-[ferredoxin] + 2 S-adenosyl-L-methionine = (sulfur carrier)-H + biotin + 2 5'-deoxyadenosine + 2 L-methionine + 2 oxidized [2Fe-2S]-[ferredoxin]. Its pathway is cofactor biosynthesis; biotin biosynthesis; biotin from 7,8-diaminononanoate: step 2/2. Catalyzes the conversion of dethiobiotin (DTB) to biotin by the insertion of a sulfur atom into dethiobiotin via a radical-based mechanism. The polypeptide is Biotin synthase (Stutzerimonas stutzeri (strain A1501) (Pseudomonas stutzeri)).